Consider the following 850-residue polypeptide: DNA mismatch repair protein MutS (850 aa).

608-615 contributes to the ATP binding site; it reads GPNMGGKS.

The protein belongs to the DNA mismatch repair MutS family.

Its function is as follows. This protein is involved in the repair of mismatches in DNA. It is possible that it carries out the mismatch recognition step. This protein has a weak ATPase activity. The sequence is that of DNA mismatch repair protein MutS from Thiobacillus denitrificans (strain ATCC 25259 / T1).